Here is a 60-residue protein sequence, read N- to C-terminus: Large ribosomal subunit protein eL37 (60 aa).

4 residues coordinate Zn(2+): Cys18, Cys21, Cys33, and Cys36. The segment at 18–36 (CRRCGKNSYHVRKKVCAAC) adopts a C4-type zinc-finger fold.

Belongs to the eukaryotic ribosomal protein eL37 family. It depends on Zn(2+) as a cofactor.

Functionally, binds to the 23S rRNA. The polypeptide is Large ribosomal subunit protein eL37 (rpl37e) (Methanothermobacter thermautotrophicus (strain ATCC 29096 / DSM 1053 / JCM 10044 / NBRC 100330 / Delta H) (Methanobacterium thermoautotrophicum)).